The following is a 460-amino-acid chain: Adenylosuccinate lyase (460 aa).

N(6)-(1,2-dicarboxyethyl)-AMP-binding positions include 15-16 (RY), 88-90 (NHD), and 120-121 (TS). Catalysis depends on His-169, which acts as the Proton donor/acceptor. Residue Gln-245 participates in N(6)-(1,2-dicarboxyethyl)-AMP binding. Residue Ser-293 is the Proton donor/acceptor of the active site. Residues Ser-294, 299 to 301 (KIN), Asn-307, Arg-333, and 338 to 342 (STVLR) contribute to the N(6)-(1,2-dicarboxyethyl)-AMP site.

The protein belongs to the lyase 1 family. Adenylosuccinate lyase subfamily. Homotetramer. Residues from neighboring subunits contribute catalytic and substrate-binding residues to each active site.

It catalyses the reaction N(6)-(1,2-dicarboxyethyl)-AMP = fumarate + AMP. The enzyme catalyses (2S)-2-[5-amino-1-(5-phospho-beta-D-ribosyl)imidazole-4-carboxamido]succinate = 5-amino-1-(5-phospho-beta-D-ribosyl)imidazole-4-carboxamide + fumarate. The protein operates within purine metabolism; AMP biosynthesis via de novo pathway; AMP from IMP: step 2/2. It participates in purine metabolism; IMP biosynthesis via de novo pathway; 5-amino-1-(5-phospho-D-ribosyl)imidazole-4-carboxamide from 5-amino-1-(5-phospho-D-ribosyl)imidazole-4-carboxylate: step 2/2. Catalyzes two reactions in de novo purine nucleotide biosynthesis. Catalyzes the breakdown of 5-aminoimidazole- (N-succinylocarboxamide) ribotide (SAICAR or 2-[5-amino-1-(5-phospho-beta-D-ribosyl)imidazole-4-carboxamido]succinate) to 5-aminoimidazole-4-carboxamide ribotide (AICAR or 5-amino-1-(5-phospho-beta-D-ribosyl)imidazole-4-carboxamide) and fumarate, and of adenylosuccinate (ADS or N(6)-(1,2-dicarboxyethyl)-AMP) to adenosine monophosphate (AMP) and fumarate. The polypeptide is Adenylosuccinate lyase (purB) (Buchnera aphidicola subsp. Baizongia pistaciae (strain Bp)).